A 175-amino-acid chain; its full sequence is E1B protein, small T-antigen (175 aa).

Residues 153-175 (LAEEDEDEEGTTLTTEAEQESSA) are disordered.

Belongs to the adenoviridae E1B 19 kDa protein family.

This Mus musculus (Mouse) protein is E1B protein, small T-antigen.